A 1262-amino-acid polypeptide reads, in one-letter code: MSGQPTAVDCLESSGSTVEDVQETPASREKSYGLPVRKGENSLESPAEQAAKDVEIEELTHSEAIAATGSTRKQCPYGGKAPDEPGKLADESEDRKGENTKAIASSPVLVAVDSDSSVELIESPVKFSSANESEKDPPKPDAVNEAAAKEAEEMTDSSISSPTSESFPEKDEKTNKENEQEPPGMEVDQDVEESISRPAEEYKIENTLKGHKRISLTEIEEHKIVDKKDDVLEVELEKGTAPKAAEDEKLNALLSDGDVFYDKECVNCNCTKLHKQYVLANMATLNFYQVLRKSSKQQFLCMGCHDTAMDLYEEYAGQLMAKQPLLLKDFHQDHADFVALDSSDEEEEEKQPEKSDFSKNKLQLIEDELDDAIKNVLNKVDFTAQLSWSKTILQAKADHLERQFALADVELEKVQTTADKMHCALYNSCPVAHKHLPTLDIEPSDYVHEVPPPGEIVRPPIQLGETYYAVKNKAIASWVSIKVIEFTESTAINGNTMKSYKIRYLNTPYQMIKTVTAKHIAYFEPPPVRLTIGTRVIAYFDGTTLSRGKDKGVVQSAFYPGIIAEPLKQANRYRYLIFYDDGYTQYVPHRDVRLVCQASEKVWEDVHAASRDFIQKYVEKYSVDRPMVQCTRGQSMTTESNGTWLYARVIDIDCSLVLMQFEGDKNHTEWIYRGSLRLGPVFRETQNNMNSSSAQQLRVPRRTEPFIRYTKEMESSSKVNQQMRAFARKSSASAQNNALAAASSAATPAGGRTNAGGVSTSNSASAVRHLNNSTIYVDDENRPKGHVVYFTAKRNLPPKMYKCHECSPNCLFKIVHRLDSYSPLAKPLLSGWERLVMRQKTKKSVVYKGPCGKSLRSLAEVHRYLRATENVLNVDNFDFTPDLKCLAEYSIDPSIVKDTDISKGQEKMAIPLVNYYDNTLPPPCTYAKQRIPTEGVHLNLDEEFLLCCDCEDDCSDKSKCACWQLTVAGVRYCNPKKPIEEIGYQYKRLHEHVPTGIYECNSRCKCKKNCLNRVVQFSLEMKLQVFKTSNRGWGLRCVNDIPKGAFICIYAGHLLTETMANEGGQDAGDEYFADLDYIEVAEQLKEGYESEVDHSDPDAEEDNGGPDAEDDDDFRPNYHYQRKIKRSSRSGSTQNSSTQSSELDSQERAVINFNPNADLDETVRENSVRRLFGKDEAPYIMDAKTTGNLGRYFNHSCSPNLFVQNVFVDTHDLRFPWVAFFSAAHIRSGTELTWNYNYEVGVVPGKVLYCQCGAPNCRLRLL.

Positions 1 to 194 are disordered; that stretch reads MSGQPTAVDC…MEVDQDVEES (194 aa). 3 stretches are compositionally biased toward basic and acidic residues: residues 26-41, 50-61, and 81-99; these read ASRE…KGEN, AAKDVEIEELTH, and APDE…KGEN. Residues 157-166 show a composition bias toward low complexity; that stretch reads SSISSPTSES. The span at 167–179 shows a compositional bias: basic and acidic residues; the sequence is FPEKDEKTNKENE. A Phosphoserine modification is found at S215. Position 217 is a phosphothreonine (T217). The stretch at 353–420 forms a coiled coil; it reads EKSDFSKNKL…LEKVQTTADK (68 aa). Tudor domains follow at residues 529 to 602 and 629 to 686; these read RLTI…SEKV and QCTR…RETQ. A disordered region spans residues 743–764; the sequence is SSAATPAGGRTNAGGVSTSNSA. In terms of domain architecture, MBD spans 818-884; it reads LDSYSPLAKP…DNFDFTPDLK (67 aa). The Pre-SET domain maps to 946–1018; sequence LCCDCEDDCS…NCLNRVVQFS (73 aa). Zn(2+) is bound by residues C948, C950, C954, C960, C962, C1000, C1004, C1006, and C1010. An SET domain is found at 1021 to 1237; that stretch reads MKLQVFKTSN…SGTELTWNYN (217 aa). Residues 1031-1033, D1069, and Y1071 each bind S-adenosyl-L-methionine; that span reads RGW. The span at 1086–1097 shows a compositional bias: basic and acidic residues; that stretch reads EGYESEVDHSDP. Residues 1086 to 1148 are disordered; it reads EGYESEVDHS…QSSELDSQER (63 aa). Acidic residues predominate over residues 1098-1113; it reads DAEEDNGGPDAEDDDD. Low complexity predominate over residues 1129–1141; sequence RSGSTQNSSTQSS. S-adenosyl-L-methionine is bound by residues R1191 and 1194 to 1195; that span reads NH. Zn(2+) is bound by residues C1197, C1250, C1252, and C1257. Residues 1246 to 1262 enclose the Post-SET domain; the sequence is KVLYCQCGAPNCRLRLL.

The protein belongs to the class V-like SAM-binding methyltransferase superfamily. Histone-lysine methyltransferase family. Suvar3-9 subfamily. In terms of tissue distribution, expressed in ovary (at protein level).

Its subcellular location is the nucleus. It localises to the chromosome. The enzyme catalyses L-lysyl(9)-[histone H3] + 3 S-adenosyl-L-methionine = N(6),N(6),N(6)-trimethyl-L-lysyl(9)-[histone H3] + 3 S-adenosyl-L-homocysteine + 3 H(+). In terms of biological role, histone methyltransferase that specifically trimethylates 'Lys-10' of histone H3 (H3K9me3) in ovary. H3K9me3 represents a specific tag for epigenetic transcriptional repression by recruiting Su(var)205/HP1 to methylated histones. Plays a central role during oogenesis. The polypeptide is Histone-lysine N-methyltransferase eggless (egg) (Drosophila melanogaster (Fruit fly)).